A 556-amino-acid polypeptide reads, in one-letter code: Neurofilament light polypeptide (556 aa).

The residue at position 2 (S2) is an N-acetylserine. Residues 2-94 (SSYGYDPFFP…KSIRSQERAQ (93 aa)) form a head region. An IF rod domain is found at 91–402 (ERAQLQDLND…KLLEGEETRL (312 aa)). The tract at residues 95-126 (LQDLNDRFACFIERVHELEQQNKVLEAELLVL) is coil 1A. Residues 127 to 139 (RQKHAEPSRFRAL) form a linker 1 region. The interval 140–235 (YEQEIRELRL…KVHEEELAEL (96 aa)) is coil 1B. The linker 12 stretch occupies residues 236–254 (QAQIQYAHLSVEMDVSAKP). The tract at residues 255–273 (DLSAALRDIRAQYEKLAAR) is coil 2A. The tract at residues 274-282 (NMQNAEEWF) is linker 2. The interval 283–398 (RSRFTVLSES…AAYRKLLEGE (116 aa)) is coil 2B. Positions 399–445 (ETRLSFTSVGSITSGYTQTAPTFGRSAYSGLQSTSYLMTTRSFPTYY) are tail, subdomain A. The tract at residues 399–556 (ETRLSFTSVG…KEETEVKKKA (158 aa)) is tail. Positions 446-556 (SSHVQEEQIE…KEETEVKKKA (111 aa)) are tail, subdomain B (acidic). Low complexity predominate over residues 464 to 473 (KAGEAKAAPA). The disordered stretch occupies residues 464–556 (KAGEAKAAPA…KEETEVKKKA (93 aa)). Positions 474–540 (EEGEEEEKEE…AEETGEEEKE (67 aa)) are enriched in acidic residues. Basic and acidic residues predominate over residues 541 to 556 (EKEAAGKEETEVKKKA).

This sequence belongs to the intermediate filament family. In terms of assembly, forms homodimers (in vitro).

Its subcellular location is the cell projection. The protein localises to the axon. It localises to the cytoplasm. It is found in the cytoskeleton. Neurofilaments usually contain three intermediate filament proteins: NEFL, NEFM, and NEFH which are involved in the maintenance of neuronal caliber. May additionally cooperate with the neuronal intermediate filament proteins to form neuronal filamentous networks. The chain is Neurofilament light polypeptide (NEFL) from Coturnix japonica (Japanese quail).